A 106-amino-acid polypeptide reads, in one-letter code: Urease subunit beta (106 aa).

This sequence belongs to the urease beta subunit family. Heterotrimer of UreA (gamma), UreB (beta) and UreC (alpha) subunits. Three heterotrimers associate to form the active enzyme.

The protein resides in the cytoplasm. It carries out the reaction urea + 2 H2O + H(+) = hydrogencarbonate + 2 NH4(+). It participates in nitrogen metabolism; urea degradation; CO(2) and NH(3) from urea (urease route): step 1/1. The protein is Urease subunit beta of Synechococcus sp. (strain CC9605).